A 513-amino-acid chain; its full sequence is Sphingosine-1-phosphate transporter SPNS2 (513 aa).

Helical transmembrane passes span 102-122 (GLLQ…FGYL), 130-150 (VILS…SFIP), 163-183 (LVGI…GDLF), 190-210 (LMLS…YITG), 222-242 (WALR…LIFV), 276-296 (LATS…PLYL), 320-340 (LIFG…GAGA), 354-374 (LVCA…FVAA), 378-398 (IIAA…NWAI), 422-442 (TSHL…SDLI), and 463-483 (LCPF…LFFL).

The protein belongs to the major facilitator superfamily. Spinster (TC 2.A.1.49) family.

Its subcellular location is the cell membrane. The protein resides in the endosome membrane. It carries out the reaction sphing-4-enine 1-phosphate(in) = sphing-4-enine 1-phosphate(out). It catalyses the reaction sphinganine 1-phosphate(in) = sphinganine 1-phosphate(out). In terms of biological role, lipid transporter that specifically mediates export of sphingosine-1-phosphate (sphing-4-enine 1-phosphate, S1P) and sphinganine-1-phosphate. This chain is Sphingosine-1-phosphate transporter SPNS2 (spns2), found in Xenopus tropicalis (Western clawed frog).